A 309-amino-acid chain; its full sequence is Protein FdhE (309 aa).

It belongs to the FdhE family.

The protein localises to the cytoplasm. Its function is as follows. Necessary for formate dehydrogenase activity. The protein is Protein FdhE of Escherichia coli O127:H6 (strain E2348/69 / EPEC).